The chain runs to 1226 residues: uncharacterized protein (1226 aa).

The protein belongs to the Mg-chelatase subunit H family.

This is an uncharacterized protein from Methanocaldococcus jannaschii (strain ATCC 43067 / DSM 2661 / JAL-1 / JCM 10045 / NBRC 100440) (Methanococcus jannaschii).